The primary structure comprises 482 residues: tRNA sulfurtransferase (482 aa).

The THUMP domain maps to 61–165; it reads LAIRDALTRI…DDRLLLIKGR (105 aa). ATP-binding positions include 183–184, Lys265, Gly287, and Gln296; that span reads LI. Residues Cys344 and Cys456 are joined by a disulfide bond. The Rhodanese domain occupies 404 to 482; it reads FGPNDVILDI…GFNNVKVYRP (79 aa). Cys456 (cysteine persulfide intermediate) is an active-site residue.

The protein belongs to the ThiI family.

The protein localises to the cytoplasm. The catalysed reaction is [ThiI sulfur-carrier protein]-S-sulfanyl-L-cysteine + a uridine in tRNA + 2 reduced [2Fe-2S]-[ferredoxin] + ATP + H(+) = [ThiI sulfur-carrier protein]-L-cysteine + a 4-thiouridine in tRNA + 2 oxidized [2Fe-2S]-[ferredoxin] + AMP + diphosphate. The enzyme catalyses [ThiS sulfur-carrier protein]-C-terminal Gly-Gly-AMP + S-sulfanyl-L-cysteinyl-[cysteine desulfurase] + AH2 = [ThiS sulfur-carrier protein]-C-terminal-Gly-aminoethanethioate + L-cysteinyl-[cysteine desulfurase] + A + AMP + 2 H(+). It participates in cofactor biosynthesis; thiamine diphosphate biosynthesis. In terms of biological role, catalyzes the ATP-dependent transfer of a sulfur to tRNA to produce 4-thiouridine in position 8 of tRNAs, which functions as a near-UV photosensor. Also catalyzes the transfer of sulfur to the sulfur carrier protein ThiS, forming ThiS-thiocarboxylate. This is a step in the synthesis of thiazole, in the thiamine biosynthesis pathway. The sulfur is donated as persulfide by IscS. The protein is tRNA sulfurtransferase of Escherichia coli O127:H6 (strain E2348/69 / EPEC).